A 189-amino-acid chain; its full sequence is Mercury resistance operon ORF3 (189 aa).

Residues 1-27 constitute a signal peptide (tat-type signal); it reads MTSPSPTARRTRLRRRTALALAAAATA. The 152-residue stretch at 38-189 folds into the Thioredoxin domain; that stretch reads TKANTPATRA…IQDALKKAGA (152 aa).

In terms of processing, predicted to be exported by the Tat system. The position of the signal peptide cleavage has not been experimentally proven.

The protein resides in the secreted. In terms of biological role, probable mercury binding protein. The protein is Mercury resistance operon ORF3 of Streptomyces lividans.